Consider the following 222-residue polypeptide: Type II restriction enzyme AbrI (222 aa).

2 disordered regions span residues 21–45 (GNRE…RRDR) and 161–222 (NQRR…SPRI). The segment covering 22–42 (NREKARQKQQESGKPDQGERR) has biased composition (basic and acidic residues). The span at 188-202 (SSASGSSRSSFTPRP) shows a compositional bias: low complexity.

It belongs to the XhoI type II restriction endonuclease family.

It catalyses the reaction Endonucleolytic cleavage of DNA to give specific double-stranded fragments with terminal 5'-phosphates.. In terms of biological role, a P subtype restriction enzyme that recognizes the double-stranded sequence 5'-CTCGAG-3' and cleaves after C-1. This is Type II restriction enzyme AbrI (abrIR) from Azospirillum brasilense.